The primary structure comprises 433 residues: Adenosylhomocysteinase A (433 aa).

Substrate contacts are provided by T57, D132, E157, K187, and D191. Residues 184–351 (SVTKSKFDNL…EGRLVNLGCA (168 aa)) are NAD binding.

The protein belongs to the adenosylhomocysteinase family. Homotetramer. The cofactor is NAD(+).

The protein localises to the cytoplasm. It catalyses the reaction S-adenosyl-L-homocysteine + H2O = L-homocysteine + adenosine. The protein operates within amino-acid biosynthesis; L-homocysteine biosynthesis; L-homocysteine from S-adenosyl-L-homocysteine: step 1/1. Its function is as follows. Catalyzes the hydrolysis of S-adenosyl-L-homocysteine to form adenosine and homocysteine. Binds copper ions. The chain is Adenosylhomocysteinase A (ahcy-a) from Xenopus laevis (African clawed frog).